Consider the following 350-residue polypeptide: Phosphoribosylformylglycinamidine cyclo-ligase (350 aa).

Belongs to the AIR synthase family.

The protein resides in the cytoplasm. The catalysed reaction is 2-formamido-N(1)-(5-O-phospho-beta-D-ribosyl)acetamidine + ATP = 5-amino-1-(5-phospho-beta-D-ribosyl)imidazole + ADP + phosphate + H(+). It functions in the pathway purine metabolism; IMP biosynthesis via de novo pathway; 5-amino-1-(5-phospho-D-ribosyl)imidazole from N(2)-formyl-N(1)-(5-phospho-D-ribosyl)glycinamide: step 2/2. The protein is Phosphoribosylformylglycinamidine cyclo-ligase of Cupriavidus necator (strain ATCC 17699 / DSM 428 / KCTC 22496 / NCIMB 10442 / H16 / Stanier 337) (Ralstonia eutropha).